Consider the following 697-residue polypeptide: Hormonally up-regulated neu tumor-associated kinase homolog (697 aa).

The region spanning 55-313 (YLIGRKLGEG…IQQALANRWL (259 aa)) is the Protein kinase domain. ATP-binding positions include 61–69 (LGEGSFAKV) and lysine 84. The Proton acceptor role is filled by aspartate 179. Composition is skewed to basic and acidic residues over residues 405-424 (KMNKNSYEERRSKDLEKRGE) and 460-473 (PVKERRSSKSERES). 2 disordered regions span residues 405-480 (KMNK…LSPF) and 586-642 (DNTS…NCVR). Over residues 586–600 (DNTSPIKGHSNQASF) the composition is skewed to polar residues. Low complexity predominate over residues 607 to 626 (SPSSPESMSPTSPHSPHSPS). Polar residues predominate over residues 627 to 637 (CNNNISGNLGS).

Belongs to the protein kinase superfamily. CAMK Ser/Thr protein kinase family. SNF1 subfamily.

The catalysed reaction is L-seryl-[protein] + ATP = O-phospho-L-seryl-[protein] + ADP + H(+). The enzyme catalyses L-threonyl-[protein] + ATP = O-phospho-L-threonyl-[protein] + ADP + H(+). The sequence is that of Hormonally up-regulated neu tumor-associated kinase homolog (hunk) from Xenopus tropicalis (Western clawed frog).